The primary structure comprises 502 residues: Glycerol kinase (502 aa).

T14 is a binding site for ADP. ATP-binding residues include T14, T15, and S16. T14 serves as a coordination point for sn-glycerol 3-phosphate. R18 lines the ADP pocket. 3 residues coordinate sn-glycerol 3-phosphate: R84, E85, and Y136. The glycerol site is built by R84, E85, and Y136. H232 is subject to Phosphohistidine; by HPr. D246 serves as a coordination point for sn-glycerol 3-phosphate. The glycerol site is built by D246 and Q247. Residues T268 and G311 each coordinate ADP. 4 residues coordinate ATP: T268, G311, Q315, and G412. ADP contacts are provided by G412 and N416.

This sequence belongs to the FGGY kinase family. In terms of assembly, homotetramer and homodimer (in equilibrium). The phosphoenolpyruvate-dependent sugar phosphotransferase system (PTS), including enzyme I, and histidine-containing protein (HPr) are required for the phosphorylation, which leads to the activation of the enzyme.

The enzyme catalyses glycerol + ATP = sn-glycerol 3-phosphate + ADP + H(+). The protein operates within polyol metabolism; glycerol degradation via glycerol kinase pathway; sn-glycerol 3-phosphate from glycerol: step 1/1. Activated by phosphorylation and inhibited by fructose 1,6-bisphosphate (FBP). Key enzyme in the regulation of glycerol uptake and metabolism. Catalyzes the phosphorylation of glycerol to yield sn-glycerol 3-phosphate. The protein is Glycerol kinase of Streptococcus sanguinis (strain SK36).